The chain runs to 130 residues: Glycine cleavage system H protein (130 aa).

The Lipoyl-binding domain occupies 24–106 (GIKVGISAFA…YQEGWLLKIT (83 aa)). The residue at position 65 (lysine 65) is an N6-lipoyllysine.

The protein belongs to the GcvH family. As to quaternary structure, the glycine cleavage system is composed of four proteins: P, T, L and H. (R)-lipoate serves as cofactor.

Its function is as follows. The glycine cleavage system catalyzes the degradation of glycine. The H protein shuttles the methylamine group of glycine from the P protein to the T protein. This chain is Glycine cleavage system H protein, found in Synechococcus sp. (strain RCC307).